Reading from the N-terminus, the 365-residue chain is 3-dehydroquinate synthase (365 aa).

NAD(+)-binding positions include 106–110 (GVIGD), 130–131 (TT), Lys142, Lys151, and 169–172 (FFAT). Glu184, His247, and His264 together coordinate Zn(2+).

It belongs to the sugar phosphate cyclases superfamily. Dehydroquinate synthase family. It depends on Co(2+) as a cofactor. Zn(2+) is required as a cofactor. Requires NAD(+) as cofactor.

It is found in the cytoplasm. The catalysed reaction is 7-phospho-2-dehydro-3-deoxy-D-arabino-heptonate = 3-dehydroquinate + phosphate. It participates in metabolic intermediate biosynthesis; chorismate biosynthesis; chorismate from D-erythrose 4-phosphate and phosphoenolpyruvate: step 2/7. Catalyzes the conversion of 3-deoxy-D-arabino-heptulosonate 7-phosphate (DAHP) to dehydroquinate (DHQ). In Listeria welshimeri serovar 6b (strain ATCC 35897 / DSM 20650 / CCUG 15529 / CIP 8149 / NCTC 11857 / SLCC 5334 / V8), this protein is 3-dehydroquinate synthase.